Consider the following 132-residue polypeptide: Ragulator complex protein LAMTOR3 homolog (132 aa).

This sequence belongs to the LAMTOR3 family. Part of the Ragulator complex.

Regulator of the TOR pathway, a signaling cascade that promotes cell growth in response to growth factors, energy levels, and amino acids. May activate the TOR signaling cascade in response to amino acids. This Dictyostelium discoideum (Social amoeba) protein is Ragulator complex protein LAMTOR3 homolog.